Consider the following 222-residue polypeptide: 7-carboxy-7-deazaguanine synthase (222 aa).

Substrate is bound by residues 16–18 and Arg-31; that span reads LQG. The Radical SAM core domain maps to 22–222; that stretch reads NLGRPAVFVR…IMAWGNARGK (201 aa). Residues Cys-35, Cys-39, and Cys-42 each contribute to the [4Fe-4S] cluster site. Thr-44 is a binding site for Mg(2+). Thr-77 provides a ligand contact to substrate. Residues Gly-79 and 126–128 each bind S-adenosyl-L-methionine; that span reads SPK.

Belongs to the radical SAM superfamily. 7-carboxy-7-deazaguanine synthase family. As to quaternary structure, homodimer. It depends on [4Fe-4S] cluster as a cofactor. S-adenosyl-L-methionine is required as a cofactor. Requires Mg(2+) as cofactor.

It catalyses the reaction 6-carboxy-5,6,7,8-tetrahydropterin + H(+) = 7-carboxy-7-deazaguanine + NH4(+). Its pathway is purine metabolism; 7-cyano-7-deazaguanine biosynthesis. Functionally, catalyzes the complex heterocyclic radical-mediated conversion of 6-carboxy-5,6,7,8-tetrahydropterin (CPH4) to 7-carboxy-7-deazaguanine (CDG), a step common to the biosynthetic pathways of all 7-deazapurine-containing compounds. The chain is 7-carboxy-7-deazaguanine synthase from Pyrobaculum aerophilum (strain ATCC 51768 / DSM 7523 / JCM 9630 / CIP 104966 / NBRC 100827 / IM2).